Consider the following 638-residue polypeptide: Threonine--tRNA ligase (638 aa).

Positions 1–61 (MPVITLPDGS…EHDARIEIVT (61 aa)) constitute a TGS domain. Positions 243–534 (DHRKIAKAQD…LIEEYAGHFP (292 aa)) are catalytic. Zn(2+) is bound by residues cysteine 334, histidine 385, and histidine 511.

This sequence belongs to the class-II aminoacyl-tRNA synthetase family. In terms of assembly, homodimer. Zn(2+) is required as a cofactor.

It is found in the cytoplasm. It carries out the reaction tRNA(Thr) + L-threonine + ATP = L-threonyl-tRNA(Thr) + AMP + diphosphate + H(+). In terms of biological role, catalyzes the attachment of threonine to tRNA(Thr) in a two-step reaction: L-threonine is first activated by ATP to form Thr-AMP and then transferred to the acceptor end of tRNA(Thr). Also edits incorrectly charged L-seryl-tRNA(Thr). The chain is Threonine--tRNA ligase from Idiomarina loihiensis (strain ATCC BAA-735 / DSM 15497 / L2-TR).